Consider the following 170-residue polypeptide: Lipoprotein signal peptidase (170 aa).

Helical transmembrane passes span 5-25, 62-82, and 89-111; these read IVGV…KAYA, SNLI…VLFV, and STIC…LRFG. Active-site residues include Asp-115 and Asp-133. A helical transmembrane segment spans residues 126-146; that stretch reads WPAFNFADVCVTCGVICFLCL.

Belongs to the peptidase A8 family.

The protein localises to the cell inner membrane. It carries out the reaction Release of signal peptides from bacterial membrane prolipoproteins. Hydrolyzes -Xaa-Yaa-Zaa-|-(S,diacylglyceryl)Cys-, in which Xaa is hydrophobic (preferably Leu), and Yaa (Ala or Ser) and Zaa (Gly or Ala) have small, neutral side chains.. The protein operates within protein modification; lipoprotein biosynthesis (signal peptide cleavage). This protein specifically catalyzes the removal of signal peptides from prolipoproteins. This chain is Lipoprotein signal peptidase, found in Anaplasma marginale (strain Florida).